Here is a 267-residue protein sequence, read N- to C-terminus: Hydroxyethylthiazole kinase 2 (267 aa).

Met41 is a binding site for substrate. The ATP site is built by Lys116 and Thr166. Gly193 contacts substrate.

It belongs to the Thz kinase family. The cofactor is Mg(2+).

The enzyme catalyses 5-(2-hydroxyethyl)-4-methylthiazole + ATP = 4-methyl-5-(2-phosphooxyethyl)-thiazole + ADP + H(+). The protein operates within cofactor biosynthesis; thiamine diphosphate biosynthesis; 4-methyl-5-(2-phosphoethyl)-thiazole from 5-(2-hydroxyethyl)-4-methylthiazole: step 1/1. Functionally, catalyzes the phosphorylation of the hydroxyl group of 4-methyl-5-beta-hydroxyethylthiazole (THZ). This chain is Hydroxyethylthiazole kinase 2, found in Streptococcus pneumoniae (strain P1031).